A 98-amino-acid polypeptide reads, in one-letter code: Citrate lyase acyl carrier protein (98 aa).

Ser14 is subject to O-(phosphoribosyl dephospho-coenzyme A)serine.

Belongs to the CitD family. In terms of assembly, oligomer with a subunit composition of (alpha,beta,gamma)6.

It localises to the cytoplasm. In terms of biological role, covalent carrier of the coenzyme of citrate lyase. In Escherichia coli O127:H6 (strain E2348/69 / EPEC), this protein is Citrate lyase acyl carrier protein.